Here is a 473-residue protein sequence, read N- to C-terminus: GTPase Der (473 aa).

2 consecutive EngA-type G domains span residues 5-170 and 178-351; these read PVVA…PNQE and LKLA…QSSM. Residues 11-18, 58-62, 123-126, 184-191, 231-235, and 296-299 contribute to the GTP site; these read GRPNVGKS, DTGGI, NKVD, DTAGV, and NKWD. The 85-residue stretch at 352-436 folds into the KH-like domain; that stretch reads FEVSTNRLTQ…PLNVVFKLNE (85 aa). The span at 438-454 shows a compositional bias: polar residues; that stretch reads PYANKSDTPTKAKTQQL. Positions 438–473 are disordered; the sequence is PYANKSDTPTKAKTQQLRQRERNRAQKFTTKDKKPR. The segment covering 455-473 has biased composition (basic and acidic residues); sequence RQRERNRAQKFTTKDKKPR.

The protein belongs to the TRAFAC class TrmE-Era-EngA-EngB-Septin-like GTPase superfamily. EngA (Der) GTPase family. In terms of assembly, associates with the 50S ribosomal subunit.

In terms of biological role, GTPase that plays an essential role in the late steps of ribosome biogenesis. This chain is GTPase Der, found in Psychrobacter arcticus (strain DSM 17307 / VKM B-2377 / 273-4).